The following is a 208-amino-acid chain: Somatotropin-B (208 aa).

The first 25 residues, 1 to 25 (MVPGSCSSFGLLVILSFQNVPDVGG), serve as a signal peptide directing secretion. H44 is a binding site for Zn(2+). A disulfide bridge links C77 with C181. E190 provides a ligand contact to Zn(2+). C198 and C206 form a disulfide bridge.

It belongs to the somatotropin/prolactin family.

Its subcellular location is the secreted. Functionally, growth hormone plays an important role in growth control. This chain is Somatotropin-B (gh-b), found in Xenopus laevis (African clawed frog).